A 435-amino-acid polypeptide reads, in one-letter code: MKHVLKWISDLRVAIFLLLIIALSSSLGTALPQKESAESYYEAYNSSPWLKVFSGESIIQLQLDHVYSSDWFLSLLLWLGIALVFCSWRRQLPALQFTLRWIDYCNPRQLSKLALAETIISTDASASIKRLEQLLKNQGWQVQAKSGRLAARRGIAGRVGPLMVHTGLVILMLGAVWGVLGGHRLERFLAPGREMELLNSHGKSQLNIALESFQIERDPVGRPEQYRSQLRLRELGNSRENNSGSIDKSLNREISVNHPLRYGGMTVYQADWALAAITVQLGRSPLLQLPLEQFPQLGEQVWGVVLPTQQDGSNPVLLALSSEKGPIEVFASDGSLITTLRPGGVAATINDVKVRVESILPASGLLLKRDPGVPLVYIGFAVALMGGGLSLISTRQIWAIAELEQQRFHVGGLCNREFTNFAQELPQFISEIQQI.

Transmembrane regions (helical) follow at residues 11 to 31, 69 to 89, and 159 to 179; these read LRVA…GTAL, SDWF…CSWR, and VGPL…VWGV.

It belongs to the Ccs1/CcsB family. May interact with CcsA.

It is found in the plastid. The protein localises to the organellar chromatophore thylakoid membrane. Its function is as follows. Required during biogenesis of c-type cytochromes (cytochrome c6 and cytochrome f) at the step of heme attachment. This Paulinella chromatophora protein is Cytochrome c biogenesis protein CcsB.